Consider the following 284-residue polypeptide: MSAQILDGKAIALELRDSIQKEVEAQVANGKKPPGLAVILVGEDPASQVYVKNKKIACEKAGFNDVSMVLPAETSQAELLAKIDELNTRDDVHGIIVQLPVPDHIDPEEIIERIDPKKDVDGFHPYNMGRLATRLPELAPCTPHGVMTMLAKTGIPLRGLNAVVVGASNIVGVPMALELLNERATVTVCHSATKDLPQKVAEADLVVVGVGIPNMVKGDWIKDGAIVIDVGINRLDDGSLCGDVEYDVAKEKASWITPVPGGVGPMTIATLLQNTLQAAYGVKA.

NADP(+) is bound by residues 166 to 168 (GAS), Ser191, and Ile232.

This sequence belongs to the tetrahydrofolate dehydrogenase/cyclohydrolase family. Homodimer.

The catalysed reaction is (6R)-5,10-methylene-5,6,7,8-tetrahydrofolate + NADP(+) = (6R)-5,10-methenyltetrahydrofolate + NADPH. It catalyses the reaction (6R)-5,10-methenyltetrahydrofolate + H2O = (6R)-10-formyltetrahydrofolate + H(+). Its pathway is one-carbon metabolism; tetrahydrofolate interconversion. Its function is as follows. Catalyzes the oxidation of 5,10-methylenetetrahydrofolate to 5,10-methenyltetrahydrofolate and then the hydrolysis of 5,10-methenyltetrahydrofolate to 10-formyltetrahydrofolate. In Hydrogenovibrio crunogenus (strain DSM 25203 / XCL-2) (Thiomicrospira crunogena), this protein is Bifunctional protein FolD 1.